The chain runs to 195 residues: Large ribosomal subunit protein uL5 (195 aa).

Residues 1–25 (MARVPPPALKKDKKEKKPPKDNSKN) are disordered.

This sequence belongs to the universal ribosomal protein uL5 family. In terms of assembly, component of the large ribosomal subunit.

The protein resides in the nucleus. The protein localises to the cytoplasm. In terms of biological role, component of the ribosome, a large ribonucleoprotein complex responsible for the synthesis of proteins in the cell. The small ribosomal subunit (SSU) binds messenger RNAs (mRNAs) and translates the encoded message by selecting cognate aminoacyl-transfer RNA (tRNA) molecules. The large subunit (LSU) contains the ribosomal catalytic site termed the peptidyl transferase center (PTC), which catalyzes the formation of peptide bonds, thereby polymerizing the amino acids delivered by tRNAs into a polypeptide chain. The nascent polypeptides leave the ribosome through a tunnel in the LSU and interact with protein factors that function in enzymatic processing, targeting, and the membrane insertion of nascent chains at the exit of the ribosomal tunnel. This chain is Large ribosomal subunit protein uL5 (RpL11), found in Spodoptera frugiperda (Fall armyworm).